A 136-amino-acid polypeptide reads, in one-letter code: MKIIDASNTVYGRLSAYVAKQLLNGEEVVIVNASKAVITGDRKFIIDKFKQRLDIGSVRKGPYYPKTPENILRRSIGDMLPKKITRGKEALSRCKVYRNLPKNVSSEKIEKVDDVMTDKVVGIITLEELSKELGGM.

The protein belongs to the universal ribosomal protein uL13 family. As to quaternary structure, part of the 50S ribosomal subunit.

In terms of biological role, this protein is one of the early assembly proteins of the 50S ribosomal subunit, although it is not seen to bind rRNA by itself. It is important during the early stages of 50S assembly. This is Large ribosomal subunit protein uL13 from Thermoplasma volcanium (strain ATCC 51530 / DSM 4299 / JCM 9571 / NBRC 15438 / GSS1).